Here is a 186-residue protein sequence, read N- to C-terminus: Ribosome-recycling factor (186 aa).

Belongs to the RRF family.

The protein localises to the cytoplasm. Its function is as follows. Responsible for the release of ribosomes from messenger RNA at the termination of protein biosynthesis. May increase the efficiency of translation by recycling ribosomes from one round of translation to another. In Chlorobium phaeobacteroides (strain DSM 266 / SMG 266 / 2430), this protein is Ribosome-recycling factor.